A 166-amino-acid chain; its full sequence is Peptide deformylase (166 aa).

Cysteine 88 and histidine 130 together coordinate Fe cation. Residue glutamate 131 is part of the active site. Histidine 134 contributes to the Fe cation binding site.

It belongs to the polypeptide deformylase family. The cofactor is Fe(2+).

It catalyses the reaction N-terminal N-formyl-L-methionyl-[peptide] + H2O = N-terminal L-methionyl-[peptide] + formate. Removes the formyl group from the N-terminal Met of newly synthesized proteins. Requires at least a dipeptide for an efficient rate of reaction. N-terminal L-methionine is a prerequisite for activity but the enzyme has broad specificity at other positions. The polypeptide is Peptide deformylase (Thermoanaerobacter sp. (strain X514)).